Here is a 346-residue protein sequence, read N- to C-terminus: Probable galacturonosyltransferase-like 6 (346 aa).

The helical; Signal-anchor for type II membrane protein transmembrane segment at 1-21 (MLWITRFAGLFSAAMAVIVLS) threads the bilayer. Residues 22–346 (PSLQSFPPAA…TPYDLYRHSH (325 aa)) are Lumenal-facing. Asn-203 carries an N-linked (GlcNAc...) asparagine glycan.

This sequence belongs to the glycosyltransferase 8 family.

The protein localises to the golgi apparatus membrane. It functions in the pathway glycan metabolism; pectin biosynthesis. In terms of biological role, may be involved in pectin and/or xylans biosynthesis in cell walls. In Arabidopsis thaliana (Mouse-ear cress), this protein is Probable galacturonosyltransferase-like 6 (GATL6).